Here is a 316-residue protein sequence, read N- to C-terminus: N-acetylmuramic acid 6-phosphate etherase (316 aa).

The 164-residue stretch at 68-231 folds into the SIS domain; the sequence is ITDRLRSGGR…STCAMVRLGK (164 aa). Glutamate 96 (proton donor) is an active-site residue. Glutamate 127 is an active-site residue.

Belongs to the GCKR-like family. MurNAc-6-P etherase subfamily. As to quaternary structure, homodimer.

It carries out the reaction N-acetyl-D-muramate 6-phosphate + H2O = N-acetyl-D-glucosamine 6-phosphate + (R)-lactate. Its pathway is amino-sugar metabolism; N-acetylmuramate degradation. Specifically catalyzes the cleavage of the D-lactyl ether substituent of MurNAc 6-phosphate, producing GlcNAc 6-phosphate and D-lactate. The chain is N-acetylmuramic acid 6-phosphate etherase from Prochlorococcus marinus (strain MIT 9313).